The primary structure comprises 432 residues: Cyclic GMP-AMP synthase-like receptor (432 aa).

ATP contacts are provided by residues S59 and 71–73; that span reads EFD. Residues E71, D73, and D205 each coordinate Mg(2+). Residues D205 and 255-262 contribute to the GTP site; that span reads KQTCSVLE. Residues 259 to 262, K284, and 303 to 307 each bind ATP; these read SVLE and TYALK.

The protein belongs to the mab-21 family. Requires Mg(2+) as cofactor. The cofactor is Mn(2+).

The catalysed reaction is GTP + ATP = 2',3'-cGAMP + 2 diphosphate. It carries out the reaction GTP + ATP = pppGp(2'-5')A + diphosphate. The enzyme catalyses pppGp(2'-5')A = 2',3'-cGAMP + diphosphate. Its function is as follows. Nucleotidyltransferase that catalyzes the formation of cyclic GMP-AMP (2',3'-cGAMP) from ATP and GTP and plays a key role in innate immunity. Directly binds some unknown ligand, activating the nucleotidyltransferase activity, leading to synthesis of 2',3'-cGAMP, a second messenger that binds to and activates Sting, thereby triggering the immune response via activation of the NF-kappa-B transcription factor. The protein is Cyclic GMP-AMP synthase-like receptor of Pocillopora damicornis (Cauliflower coral).